Here is a 965-residue protein sequence, read N- to C-terminus: Argonaute protein wago-4 (965 aa).

The tract at residues 1-34 (MPALPPVYTPSGAPSSVHAPPAVPPVPVPTQPLR) is disordered. A compositionally biased stretch (low complexity) spans 10–20 (PSGAPSSVHAP). Pro residues predominate over residues 21 to 30 (PAVPPVPVPT). The PAZ domain occupies 318 to 428 (PILDKLKEIT…YPMELLKISS (111 aa)). A Piwi domain is found at 594–924 (TFVFIITDDS…YAKRGRNLWN (331 aa)).

This sequence belongs to the argonaute family. WAGO subfamily. Interacts with znfx-1; the interaction promotes the transmission of epigenetic information across generations. May interact with mina-1. In terms of tissue distribution, expressed in the hermaphrodite germline and in oocytes. Expressed at a low level in the male germline. Not expressed in the soma of hermaphrodites or males.

The protein localises to the cytoplasm. It localises to the perinuclear region. It is found in the cytoplasmic granule. Argonaute protein which is involved in the endogenous small interfering RNA (endo-siRNA) pathway and is required for RNA-mediated gene silencing (RNAi) in the germline. Interacts with secondary 22G-RNAs, which are RNA-dependent RNA polymerase-derived endo-siRNAs, typically 22 nucleotides in length with a 5'guanosine residue. Also interacts with the mRNA targets of 22G-RNAs. Associates with znfx-1 to mediate small RNA-directed transgenerational epigenetic inheritance of both germline- and soma-expressed genes. The sequence is that of Argonaute protein wago-4 from Caenorhabditis elegans.